Reading from the N-terminus, the 196-residue chain is Pyridoxal 5'-phosphate synthase subunit PdxT (196 aa).

47–49 serves as a coordination point for L-glutamine; that stretch reads GES. Catalysis depends on Cys-79, which acts as the Nucleophile. L-glutamine-binding positions include Arg-106 and 134–135; that span reads IR. Catalysis depends on charge relay system residues His-170 and Glu-172.

It belongs to the glutaminase PdxT/SNO family. In terms of assembly, in the presence of PdxS, forms a dodecamer of heterodimers. Only shows activity in the heterodimer.

It catalyses the reaction aldehydo-D-ribose 5-phosphate + D-glyceraldehyde 3-phosphate + L-glutamine = pyridoxal 5'-phosphate + L-glutamate + phosphate + 3 H2O + H(+). The enzyme catalyses L-glutamine + H2O = L-glutamate + NH4(+). Its pathway is cofactor biosynthesis; pyridoxal 5'-phosphate biosynthesis. Catalyzes the hydrolysis of glutamine to glutamate and ammonia as part of the biosynthesis of pyridoxal 5'-phosphate. The resulting ammonia molecule is channeled to the active site of PdxS. The chain is Pyridoxal 5'-phosphate synthase subunit PdxT from Bacillus cereus (strain B4264).